The sequence spans 86 residues: ATP synthase subunit c (86 aa).

2 helical membrane-spanning segments follow: residues Val-8–Ile-28 and Gly-66–Leu-86.

The protein belongs to the ATPase C chain family. As to quaternary structure, F-type ATPases have 2 components, F(1) - the catalytic core - and F(0) - the membrane proton channel. F(1) has five subunits: alpha(3), beta(3), gamma(1), delta(1), epsilon(1). F(0) has three main subunits: a(1), b(2) and c(10-14). The alpha and beta chains form an alternating ring which encloses part of the gamma chain. F(1) is attached to F(0) by a central stalk formed by the gamma and epsilon chains, while a peripheral stalk is formed by the delta and b chains.

It localises to the cell membrane. Functionally, f(1)F(0) ATP synthase produces ATP from ADP in the presence of a proton or sodium gradient. F-type ATPases consist of two structural domains, F(1) containing the extramembraneous catalytic core and F(0) containing the membrane proton channel, linked together by a central stalk and a peripheral stalk. During catalysis, ATP synthesis in the catalytic domain of F(1) is coupled via a rotary mechanism of the central stalk subunits to proton translocation. Key component of the F(0) channel; it plays a direct role in translocation across the membrane. A homomeric c-ring of between 10-14 subunits forms the central stalk rotor element with the F(1) delta and epsilon subunits. This Natranaerobius thermophilus (strain ATCC BAA-1301 / DSM 18059 / JW/NM-WN-LF) protein is ATP synthase subunit c.